The sequence spans 352 residues: Zinc finger protein 185 (352 aa).

2 disordered regions span residues 1-73 and 86-121; these read MTTE…ELQS and DVLP…ITPP. Position 18 is a phosphoserine (S18). The segment covering 61 to 72 has biased composition (polar residues); it reads KKTTSSPTQELQ. At T137 the chain carries Phosphothreonine. Residues 251-268 are compositionally biased toward polar residues; the sequence is VSSGKPVSSHCDSPSSIE. The disordered stretch occupies residues 251–287; that stretch reads VSSGKPVSSHCDSPSSIEDSLDLAKKPPHEGTPSERP. Residues 272 to 287 show a composition bias toward basic and acidic residues; sequence DLAKKPPHEGTPSERP. The LIM zinc-binding domain occupies 292 to 347; it reads CTYCSHEIQDCPKITLEHLGICCHEYCFKCGICNKPMGDLLDQIFIHRDTIHCGKC.

As to expression, expressed in skin, kidney, ovary, testis. Also expressed in brain, cartilage, heart, lung, spleen and thymus.

Its subcellular location is the cytoplasm. It is found in the cytoskeleton. It localises to the cell junction. The protein localises to the focal adhesion. Functionally, may be involved in the regulation of cellular proliferation and/or differentiation. This Mus musculus (Mouse) protein is Zinc finger protein 185 (Znf185).